We begin with the raw amino-acid sequence, 490 residues long: Cysteine desulfurase, mitochondrial (490 aa).

Pyridoxal 5'-phosphate contacts are provided by residues 161 to 162 (AT), N241, Q269, and 289 to 291 (SSH). The residue at position 292 (K292) is an N6-(pyridoxal phosphate)lysine. T329 contacts pyridoxal 5'-phosphate. The Cysteine persulfide intermediate role is filled by C414. C414 contacts [2Fe-2S] cluster.

This sequence belongs to the class-V pyridoxal-phosphate-dependent aminotransferase family. NifS/IscS subfamily. The cofactor is pyridoxal 5'-phosphate.

Its subcellular location is the mitochondrion. The enzyme catalyses (sulfur carrier)-H + L-cysteine = (sulfur carrier)-SH + L-alanine. Its function is as follows. Catalyzes the removal of elemental sulfur from cysteine to produce alanine. It supplies the inorganic sulfur for iron-sulfur (Fe-S) clusters. Plays a role in both tRNA-processing and mitochondrial metabolism. Involved in the 2-thio-modification of both 5-carboxymethylaminomethyl-2-thiouridine in mitochondrial tRNAs and 5-methoxycarbonylmethyl-2-thiouridine (mcm5s2U) in cytoplasmic tRNAs. This Eremothecium gossypii (strain ATCC 10895 / CBS 109.51 / FGSC 9923 / NRRL Y-1056) (Yeast) protein is Cysteine desulfurase, mitochondrial.